A 471-amino-acid chain; its full sequence is Cytochrome P450 monooxygenase afvE (471 aa).

Residues 265 to 285 (IIFYHFELSTPVAFFIIFAVY) traverse the membrane as a helical segment. Cys-410 provides a ligand contact to heme.

It belongs to the cytochrome P450 family. It depends on heme as a cofactor.

The protein localises to the membrane. The protein operates within secondary metabolite biosynthesis. Its function is as follows. Cytochrome P450 monooxygenase; part of the gene cluster that mediates the biosynthesis of aflavarin, a bicoumarin that exhibits anti-insectan activity against the fungivorous beetle C.hemipterus. This chain is Cytochrome P450 monooxygenase afvE, found in Aspergillus flavus (strain ATCC 200026 / FGSC A1120 / IAM 13836 / NRRL 3357 / JCM 12722 / SRRC 167).